Reading from the N-terminus, the 434-residue chain is Putative D-alanyl-D-alanine carboxypeptidase (434 aa).

Residues 7–25 traverse the membrane as a helical; Signal-anchor segment; sequence YLSLLAVSCSVSAAKYPVL.

The protein belongs to the peptidase S12 family. YfeW subfamily.

The protein localises to the cell inner membrane. The enzyme catalyses Preferential cleavage: (Ac)2-L-Lys-D-Ala-|-D-Ala. Also transpeptidation of peptidyl-alanyl moieties that are N-acyl substituents of D-alanine.. Functionally, penicillin-binding protein. Has low DD-carboxypeptidase activity. The polypeptide is Putative D-alanyl-D-alanine carboxypeptidase (Escherichia coli (strain K12)).